Consider the following 350-residue polypeptide: UDP-3-O-acylglucosamine N-acyltransferase (350 aa).

His244 (proton acceptor) is an active-site residue.

Belongs to the transferase hexapeptide repeat family. LpxD subfamily. In terms of assembly, homotrimer.

It carries out the reaction a UDP-3-O-[(3R)-3-hydroxyacyl]-alpha-D-glucosamine + a (3R)-hydroxyacyl-[ACP] = a UDP-2-N,3-O-bis[(3R)-3-hydroxyacyl]-alpha-D-glucosamine + holo-[ACP] + H(+). It functions in the pathway bacterial outer membrane biogenesis; LPS lipid A biosynthesis. Catalyzes the N-acylation of UDP-3-O-acylglucosamine using 3-hydroxyacyl-ACP as the acyl donor. Is involved in the biosynthesis of lipid A, a phosphorylated glycolipid that anchors the lipopolysaccharide to the outer membrane of the cell. This is UDP-3-O-acylglucosamine N-acyltransferase from Janthinobacterium sp. (strain Marseille) (Minibacterium massiliensis).